The sequence spans 288 residues: Acetyl-coenzyme A carboxylase carboxyl transferase subunit beta (288 aa).

Positions 32 to 288 (MWAKCPSCKR…LRLHSLEGWR (257 aa)) constitute a CoA carboxyltransferase N-terminal domain. Zn(2+)-binding residues include Cys-36, Cys-39, Cys-54, and Cys-57. Residues 36–57 (CPSCKRTLYTKEMGAEKICPHC) form a C4-type zinc finger.

It belongs to the AccD/PCCB family. As to quaternary structure, acetyl-CoA carboxylase is a heterohexamer composed of biotin carboxyl carrier protein (AccB), biotin carboxylase (AccC) and two subunits each of ACCase subunit alpha (AccA) and ACCase subunit beta (AccD). It depends on Zn(2+) as a cofactor.

It is found in the cytoplasm. It catalyses the reaction N(6)-carboxybiotinyl-L-lysyl-[protein] + acetyl-CoA = N(6)-biotinyl-L-lysyl-[protein] + malonyl-CoA. It functions in the pathway lipid metabolism; malonyl-CoA biosynthesis; malonyl-CoA from acetyl-CoA: step 1/1. In terms of biological role, component of the acetyl coenzyme A carboxylase (ACC) complex. Biotin carboxylase (BC) catalyzes the carboxylation of biotin on its carrier protein (BCCP) and then the CO(2) group is transferred by the transcarboxylase to acetyl-CoA to form malonyl-CoA. In Enterococcus faecalis (strain ATCC 700802 / V583), this protein is Acetyl-coenzyme A carboxylase carboxyl transferase subunit beta.